Here is a 484-residue protein sequence, read N- to C-terminus: Nuclear rim protein 1 (484 aa).

Position 3 is a phosphoserine (S3). The next 2 membrane-spanning stretches (helical) occupy residues 145–165 (FTIFILLSLNLYVSCKFMFGY) and 252–272 (TAIVFLSFSDVSFTSAIAIVF). The disordered stretch occupies residues 416 to 457 (SSNENLEKGGAFLPNQDQNRPSKSLSPLRKTPLSARQKRFEG). The residue at position 417 (S417) is a Phosphoserine. The span at 430-440 (NQDQNRPSKSL) shows a compositional bias: polar residues. Residue S474 is modified to Phosphoserine.

Belongs to the NUR1 family. Interacts with CSM1.

It is found in the nucleus membrane. In terms of biological role, member of a perinuclear network that controls recombination at multiple loci to maintain genome stability. Required for rDNA repeat stability. The polypeptide is Nuclear rim protein 1 (NUR1) (Saccharomyces cerevisiae (strain Lalvin EC1118 / Prise de mousse) (Baker's yeast)).